Reading from the N-terminus, the 336-residue chain is Tetraacyldisaccharide 4'-kinase (336 aa).

ATP is bound at residue 60 to 67 (TVGGTGKT).

The protein belongs to the LpxK family.

It catalyses the reaction a lipid A disaccharide + ATP = a lipid IVA + ADP + H(+). Its pathway is glycolipid biosynthesis; lipid IV(A) biosynthesis; lipid IV(A) from (3R)-3-hydroxytetradecanoyl-[acyl-carrier-protein] and UDP-N-acetyl-alpha-D-glucosamine: step 6/6. Its function is as follows. Transfers the gamma-phosphate of ATP to the 4'-position of a tetraacyldisaccharide 1-phosphate intermediate (termed DS-1-P) to form tetraacyldisaccharide 1,4'-bis-phosphate (lipid IVA). In Pseudomonas fluorescens (strain ATCC BAA-477 / NRRL B-23932 / Pf-5), this protein is Tetraacyldisaccharide 4'-kinase.